The primary structure comprises 226 residues: UPF0758 protein PsycPRwf_0491 (226 aa).

An MPN domain is found at 102 to 224; it reads SLNRSQVVKD…TLSFAETATA (123 aa). Zn(2+) is bound by residues H173, H175, and D186. Positions 173–186 match the JAMM motif motif; sequence HNHPNQDATPSAAD.

This sequence belongs to the UPF0758 family.

The polypeptide is UPF0758 protein PsycPRwf_0491 (Psychrobacter sp. (strain PRwf-1)).